A 1886-amino-acid chain; its full sequence is Nuclear pore membrane glycoprotein 210 (1886 aa).

An N-terminal signal peptide occupies residues 1 to 25 (MARASLIQPGLWALLLLQAVGPAVA). Residues 26–1805 (AKLNIPKVLL…GASLLSHFLD (1780 aa)) lie on the Perinuclear space side of the membrane. 4 N-linked (GlcNAc...) asparagine glycosylation sites follow: Asn337, Asn484, Asn681, and Asn1039. The BIG2 domain occupies 1078 to 1151 (FPPFRLIPRK…VQAVDAETGK (74 aa)). A helical membrane pass occupies residues 1806 to 1828 (SYQVMFFTFFALLAGTAVTIIAY). Residues 1829 to 1886 (HTVCAPRELASPLALTPHASPQHSPHYLASSPTAFNTLPSDRKASPPSGLWSPAYASH) lie on the Cytoplasmic side of the membrane. A Phosphoserine modification is found at Ser1839. Thr1844 bears the Phosphothreonine mark. The segment at 1866 to 1886 (LPSDRKASPPSGLWSPAYASH) is disordered. 4 positions are modified to phosphoserine: Ser1873, Ser1876, Ser1880, and Ser1885.

This sequence belongs to the NUP210 family. As to quaternary structure, forms dimers and possibly higher-order oligomers. Post-translationally, N-glycosylated, but not all potential glycosylation sites may be used. Contains high-mannose type oligosaccharides. In terms of processing, phosphorylated at Ser-1880 in mitosis specifically; not phosphorylated in interphase.

The protein localises to the nucleus. The protein resides in the nuclear pore complex. It localises to the nucleus membrane. Its subcellular location is the endoplasmic reticulum membrane. In terms of biological role, nucleoporin essential for nuclear pore assembly and fusion, nuclear pore spacing, as well as structural integrity. The protein is Nuclear pore membrane glycoprotein 210 (Nup210) of Rattus norvegicus (Rat).